The following is a 201-amino-acid chain: Cytochrome c biogenesis ATP-binding export protein CcmA (201 aa).

Residues 3 to 200 (LIAENLGGER…EGAELRMGVA (198 aa)) enclose the ABC transporter domain. An ATP-binding site is contributed by 35 to 42 (GPNGSGKS).

The protein belongs to the ABC transporter superfamily. CcmA exporter (TC 3.A.1.107) family. The complex is composed of two ATP-binding proteins (CcmA) and two transmembrane proteins (CcmB).

The protein resides in the cell inner membrane. It catalyses the reaction heme b(in) + ATP + H2O = heme b(out) + ADP + phosphate + H(+). Functionally, part of the ABC transporter complex CcmAB involved in the biogenesis of c-type cytochromes; once thought to export heme, this seems not to be the case, but its exact role is uncertain. Responsible for energy coupling to the transport system. This is Cytochrome c biogenesis ATP-binding export protein CcmA from Mesorhizobium japonicum (strain LMG 29417 / CECT 9101 / MAFF 303099) (Mesorhizobium loti (strain MAFF 303099)).